A 91-amino-acid polypeptide reads, in one-letter code: Small ribosomal subunit protein bS20 (91 aa).

Positions 1-21 (MPLHKSAEKRLRQSARRNERN) are enriched in basic and acidic residues. Disordered regions lie at residues 1–25 (MPLHKSAEKRLRQSARRNERNRARK) and 71–91 (NKASRKKSQLSRMLNAYAQKD).

Belongs to the bacterial ribosomal protein bS20 family.

Functionally, binds directly to 16S ribosomal RNA. In Prosthecochloris aestuarii (strain DSM 271 / SK 413), this protein is Small ribosomal subunit protein bS20.